The chain runs to 505 residues: Keratin, type II cuticular Hb1 (505 aa).

The segment at 1–106 (MTCGSGFGGR…PNAQCVKQEE (106 aa)) is head. One can recognise an IF rod domain in the interval 106-417 (EKEQIKSLNS…RLLEGEEQRL (312 aa)). A coil 1A region spans residues 107–141 (KEQIKSLNSRFAAFIDKVRFLEQQNKLLETKLQFY). The tract at residues 142–151 (QNRECCQSNL) is linker 1. The segment at 152–252 (EPLFEGYIET…YEEEILILQS (101 aa)) is coil 1B. Lys212 participates in a covalent cross-link: Glycyl lysine isopeptide (Lys-Gly) (interchain with G-Cter in SUMO1). The interval 253–269 (HISDTSVVVKLDNSRDL) is linker 12. Residues 270 to 413 (NMDCIIAEIK…ATYRRLLEGE (144 aa)) are coil 2. Residues 414–505 (EQRLCEGIGA…GSCGSSCRKC (92 aa)) form a tail region.

It belongs to the intermediate filament family. Heterotetramer of two type I and two type II keratins. Abundantly expressed in the differentiating cortex of growing (anagen) hair. Expression is restricted to the keratinocytes of the hair cortex and is absent from inner root sheath and medulla. Expressed in malignant lymph node tissue in breast carcinoma tissue.

This Homo sapiens (Human) protein is Keratin, type II cuticular Hb1 (KRT81).